The following is a 502-amino-acid chain: UPF0371 protein CLB_0371 (502 aa).

This sequence belongs to the UPF0371 family.

The sequence is that of UPF0371 protein CLB_0371 from Clostridium botulinum (strain ATCC 19397 / Type A).